The following is a 276-amino-acid chain: Large ribosomal subunit protein uL2 (276 aa).

The segment at 212 to 276 is disordered; that stretch reads NRHRGIRPQT…KLIISRKKHK (65 aa). Basic residues predominate over residues 257–276; the sequence is YKTRKKKASDKLIISRKKHK.

It belongs to the universal ribosomal protein uL2 family. In terms of assembly, part of the 50S ribosomal subunit. Forms a bridge to the 30S subunit in the 70S ribosome.

In terms of biological role, one of the primary rRNA binding proteins. Required for association of the 30S and 50S subunits to form the 70S ribosome, for tRNA binding and peptide bond formation. It has been suggested to have peptidyltransferase activity; this is somewhat controversial. Makes several contacts with the 16S rRNA in the 70S ribosome. In Helicobacter pylori (strain HPAG1), this protein is Large ribosomal subunit protein uL2.